The following is a 443-amino-acid chain: Flavastacin (443 aa).

Positions 1-15 are cleaved as a signal peptide; sequence MTRKLLILSGCLILA. A propeptide spans 16–91 (activation peptide); it reads LNSCKSDMET…ANPDISTVER (76 aa). The region spanning 92–289 is the Peptidase M12A domain; it reads STIVSSFIKT…AGINHLYGPV (198 aa). Histidine 189 is a binding site for Zn(2+). Glutamate 190 is an active-site residue. Residues histidine 193 and histidine 199 each coordinate Zn(2+). One can recognise a Ricin B-type lectin domain in the interval 297 to 440; that stretch reads GTYTLTTSLA…PYTKQRFTLT (144 aa). A glycan (O-linked (Man...) serine) is linked at serine 355.

Zn(2+) is required as a cofactor. Post-translationally, O-linked glycan consists of the Man, GlcNAc, GlcU, Glc, GlcU, Rha, Man heptasaccharide.

The catalysed reaction is Hydrolyzes polypeptides on the amino-side of Asp in -Xaa-|-Asp-. Acts very slowly on -Xaa-|-Glu.. Its function is as follows. Zinc metallendopeptidase that cleaves preferentially on N-terminal side of aspartate-containing substrates. The polypeptide is Flavastacin (Elizabethkingia meningoseptica (Chryseobacterium meningosepticum)).